Reading from the N-terminus, the 434-residue chain is Trigger factor (434 aa).

One can recognise a PPIase FKBP-type domain in the interval 160-245 (GDKVKMNFVG…LTEVQAAQLP (86 aa)).

Belongs to the FKBP-type PPIase family. Tig subfamily.

The protein resides in the cytoplasm. The catalysed reaction is [protein]-peptidylproline (omega=180) = [protein]-peptidylproline (omega=0). Its function is as follows. Involved in protein export. Acts as a chaperone by maintaining the newly synthesized protein in an open conformation. Functions as a peptidyl-prolyl cis-trans isomerase. In Shewanella denitrificans (strain OS217 / ATCC BAA-1090 / DSM 15013), this protein is Trigger factor.